The sequence spans 519 residues: Putative cysteine ligase BshC (519 aa).

Coiled coils occupy residues 51–71 (LNAL…SLKE) and 440–464 (TKLN…HEQA).

This sequence belongs to the BshC family.

Functionally, involved in bacillithiol (BSH) biosynthesis. May catalyze the last step of the pathway, the addition of cysteine to glucosamine malate (GlcN-Mal) to generate BSH. This is Putative cysteine ligase BshC from Exiguobacterium sibiricum (strain DSM 17290 / CCUG 55495 / CIP 109462 / JCM 13490 / 255-15).